Consider the following 650-residue polypeptide: MAPVSLPPGFRFHPTDEELIIYYLKRKINGRQIELEIIPEVDLYKCEPWDLPEKSFLPSKDLEWYFFSPRDRKYPNGSRTNRATKAGYWKATGKDRKVNSQRRAVGMKKTLVYYRGRAPHGSRTDWVMHEYRLDERECETDTGLQDAYALCRVFKKTAPGPKIIEHYGVVHHHVEQPQWMTSSIDRSPTLDVSCDGRGDDFESSSFSFPTETPMDSMHGGFGMQMSAPHEDGKWMQFLSEDAFNATNPFLTNPVSANFSCLPSKVDVALECARLQHRLTLPPLEVEDFPQDVSLDTKIGILRSNPNEVDILQEFLSVATASQELINGSTSSYPEMWLGASTSSASYVNELSSLVEMGGVGTSNHHESARLQVEIADMEVFKDEKKRVENLRGVKLVNNDLGEIVVEGDESNPTEDIIAQYPIKVTADNSGEAGHRMTDPTDVGGIDTAPIFSQSQPDDFAAGFDDVNPNASFDLYEKVDVNHRLFVSRVAAAKTFFHRIEPSKKVSFHSNPAATAVSKATEKFHFPVTTKVSGRVSIFSKFKALIRDKFLMMRPSHSYQRLGSKETTVNELLQIVSLLLAPKQINGCPTEQELVKKKAKEVMKPGWGREGSNKLWLPLSKGKGISSMFLSGKWTFLTSALAISTPAECDH.

Positions 6–156 (LPPGFRFHPT…AYALCRVFKK (151 aa)) constitute an NAC domain. The DNA-binding element occupies 105 to 162 (VGMKKTLVYYRGRAPHGSRTDWVMHEYRLDERECETDTGLQDAYALCRVFKKTAPGPK).

Expressed in leaves, roots and flowers.

It is found in the nucleus. Transcription factor that functions as a regulator of the jasmonate (JA) signaling pathway. May regulate the expression of genes encoding JA biosynthetic enzymes, such as lipoxygenase 7 (CM-LOX1), allene oxide synthase 2 (AOS2) and OPDA reductase 7 (OPR7). Involved in abscisic acid-induced leaf senescence. Activates the abscisic acid (ABA) signaling-associated gene ABI5 and the senescence-associated gene NYC1 by directly binding to the mitochondrial dysfunction motif (MDM) present in their promoters. Possesses transcriptional activator activity in yeast. Required for the multiplication of the rice dwarf virus (RDV). The sequence is that of NAC domain-containing protein 54 from Oryza sativa subsp. japonica (Rice).